A 309-amino-acid chain; its full sequence is Porphobilinogen deaminase (309 aa).

S-(dipyrrolylmethanemethyl)cysteine is present on cysteine 241.

This sequence belongs to the HMBS family. As to quaternary structure, monomer. It depends on dipyrromethane as a cofactor.

It catalyses the reaction 4 porphobilinogen + H2O = hydroxymethylbilane + 4 NH4(+). The protein operates within porphyrin-containing compound metabolism; protoporphyrin-IX biosynthesis; coproporphyrinogen-III from 5-aminolevulinate: step 2/4. Tetrapolymerization of the monopyrrole PBG into the hydroxymethylbilane pre-uroporphyrinogen in several discrete steps. In Bacillus mycoides (strain KBAB4) (Bacillus weihenstephanensis), this protein is Porphobilinogen deaminase.